Consider the following 512-residue polypeptide: Activin receptor type-2B (512 aa).

The first 18 residues, 1–18, serve as a signal peptide directing secretion; the sequence is MTAPWVALALLWGSLCAG. The Extracellular portion of the chain corresponds to 19-137; that stretch reads SGRGEAETRE…PPPTAPTLLT (119 aa). 5 cysteine pairs are disulfide-bonded: Cys29/Cys59, Cys49/Cys77, Cys84/Cys103, Cys90/Cys102, and Cys104/Cys109. N-linked (GlcNAc...) asparagine glycans are attached at residues Asn42 and Asn65. The helical transmembrane segment at 138-158 threads the bilayer; sequence VLAYSLLPIGGLSLIVLLAFW. Topologically, residues 159–512 are cytoplasmic; it reads MYRHRKPPYG…VDLPPKESSI (354 aa). In terms of domain architecture, Protein kinase spans 190 to 480; it reads LQLLEIKARG…AGCVEERVSL (291 aa). ATP-binding positions include 196–204 and Lys217; that span reads KARGRFGCV. Residue Asp321 is the Proton acceptor of the active site. Positions 491-512 are interaction with DYNLT1; the sequence is DCLVSLVTSVTNVDLPPKESSI.

This sequence belongs to the protein kinase superfamily. TKL Ser/Thr protein kinase family. TGFB receptor subfamily. As to quaternary structure, forms an activin receptor complex with activin type II receptors such as ACVR1B. Interacts with VPS39. Interacts with DYNLT1. Interacts with BMP3. Interacts with BMP2. Interacts with BMP6. It depends on Mg(2+) as a cofactor. The cofactor is Mn(2+). Phosphorylated. Constitutive phosphorylation is in part catalyzed by its own kinase activity.

The protein resides in the cell membrane. It carries out the reaction L-threonyl-[receptor-protein] + ATP = O-phospho-L-threonyl-[receptor-protein] + ADP + H(+). The catalysed reaction is L-seryl-[receptor-protein] + ATP = O-phospho-L-seryl-[receptor-protein] + ADP + H(+). Functionally, transmembrane serine/threonine kinase activin type-2 receptor forming an activin receptor complex with activin type-1 serine/threonine kinase receptors (ACVR1, ACVR1B or ACVR1c). Transduces the activin signal from the cell surface to the cytoplasm and is thus regulating many physiological and pathological processes including neuronal differentiation and neuronal survival, hair follicle development and cycling, FSH production by the pituitary gland, wound healing, extracellular matrix production, immunosuppression and carcinogenesis. Activin is also thought to have a paracrine or autocrine role in follicular development in the ovary. Within the receptor complex, the type-2 receptors act as a primary activin receptors (binds activin-A/INHBA, activin-B/INHBB as well as inhibin-A/INHA-INHBA). The type-1 receptors like ACVR1B act as downstream transducers of activin signals. Activin binds to type-2 receptor at the plasma membrane and activates its serine-threonine kinase. The activated receptor type-2 then phosphorylates and activates the type-1 receptor. Once activated, the type-1 receptor binds and phosphorylates the SMAD proteins SMAD2 and SMAD3, on serine residues of the C-terminal tail. Soon after their association with the activin receptor and subsequent phosphorylation, SMAD2 and SMAD3 are released into the cytoplasm where they interact with the common partner SMAD4. This SMAD complex translocates into the nucleus where it mediates activin-induced transcription. Inhibitory SMAD7, which is recruited to ACVR1B through FKBP1A, can prevent the association of SMAD2 and SMAD3 with the activin receptor complex, thereby blocking the activin signal. Activin signal transduction is also antagonized by the binding to the receptor of inhibin-B via the IGSF1 inhibin coreceptor. This Homo sapiens (Human) protein is Activin receptor type-2B (ACVR2B).